The following is a 154-amino-acid chain: 6,7-dimethyl-8-ribityllumazine synthase (154 aa).

Residues F22, 56-58, and 80-82 contribute to the 5-amino-6-(D-ribitylamino)uracil site; these read AFE and AVI. 85-86 contributes to the (2S)-2-hydroxy-3-oxobutyl phosphate binding site; it reads ET. Residue H88 is the Proton donor of the active site. 5-amino-6-(D-ribitylamino)uracil is bound at residue F113. (2S)-2-hydroxy-3-oxobutyl phosphate is bound at residue R127.

This sequence belongs to the DMRL synthase family.

The catalysed reaction is (2S)-2-hydroxy-3-oxobutyl phosphate + 5-amino-6-(D-ribitylamino)uracil = 6,7-dimethyl-8-(1-D-ribityl)lumazine + phosphate + 2 H2O + H(+). The protein operates within cofactor biosynthesis; riboflavin biosynthesis; riboflavin from 2-hydroxy-3-oxobutyl phosphate and 5-amino-6-(D-ribitylamino)uracil: step 1/2. Functionally, catalyzes the formation of 6,7-dimethyl-8-ribityllumazine by condensation of 5-amino-6-(D-ribitylamino)uracil with 3,4-dihydroxy-2-butanone 4-phosphate. This is the penultimate step in the biosynthesis of riboflavin. The sequence is that of 6,7-dimethyl-8-ribityllumazine synthase from Thermoanaerobacter pseudethanolicus (strain ATCC 33223 / 39E) (Clostridium thermohydrosulfuricum).